The following is a 459-amino-acid chain: SLIT-ROBO Rho GTPase-activating protein 2C (459 aa).

One can recognise an F-BAR domain in the interval 22–325 (KEIRAQLTEQ…AVENLDATSD (304 aa)). The segment covering 181–202 (LKEAEKQEEKQIGKSVKQEDRQ) has biased composition (basic and acidic residues). A disordered region spans residues 181 to 211 (LKEAEKQEEKQIGKSVKQEDRQTPCSPDSTA). A coiled-coil region spans residues 363–401 (QSELVQRCQQLQSRLSTLKIENEEVKKTMEATLQTIQDI).

Homodimer. Interacts (via F-BAR domain) with SRGAP2/SRGAP2A (via F-BAR domain); formation of the heterodimer inhibits SRGAP2/SRGAP2A function. As to expression, ubiquitously expressed with higher expression in cerebellum. Probably expressed in fetal and adult neurons (at protein level).

Its function is as follows. Human-specific protein that acts as a key modifier of cortical connectivity in the human brain. Acts by inhibiting the functions of ancestral paralog SRGAP2/SRGAP2A, a postsynaptic protein that regulates excitatory and inhibitory synapse maturation and density in cortical pyramidal neurons. SRGAP2C is unstable but is able to heterodimerize with SRGAP2/SRGAP2A, thereby reducing SRGAP2/SRGAP2A levels through proteasome-dependent degradation. Inhibition of SRGAP2/SRGAP2A by SRGAP2C leads to an increase in synaptic density and protracted synaptic maturation of both excitatory and inhibitory synapses. Modifies cortical circuit connectivity by increasing the number of local and long-range cortical inputs received by layer 2/3 pyramidal neurons. Also able to increase the probability of sensory-evoked responses by layer 2/3 pyramidal neurons. This chain is SLIT-ROBO Rho GTPase-activating protein 2C, found in Homo sapiens (Human).